The chain runs to 504 residues: Maturase K (504 aa).

This sequence belongs to the intron maturase 2 family. MatK subfamily.

It localises to the plastid. It is found in the chloroplast. Its function is as follows. Usually encoded in the trnK tRNA gene intron. Probably assists in splicing its own and other chloroplast group II introns. The protein is Maturase K of Prionotes cerinthoides (Climbing heath).